The chain runs to 509 residues: 2-succinyl-5-enolpyruvyl-6-hydroxy-3-cyclohexene-1-carboxylate synthase (509 aa).

The protein belongs to the TPP enzyme family. MenD subfamily. As to quaternary structure, homodimer. Mg(2+) serves as cofactor. It depends on Mn(2+) as a cofactor. Requires thiamine diphosphate as cofactor.

The enzyme catalyses isochorismate + 2-oxoglutarate + H(+) = 5-enolpyruvoyl-6-hydroxy-2-succinyl-cyclohex-3-ene-1-carboxylate + CO2. Its pathway is quinol/quinone metabolism; 1,4-dihydroxy-2-naphthoate biosynthesis; 1,4-dihydroxy-2-naphthoate from chorismate: step 2/7. The protein operates within quinol/quinone metabolism; menaquinone biosynthesis. Catalyzes the thiamine diphosphate-dependent decarboxylation of 2-oxoglutarate and the subsequent addition of the resulting succinic semialdehyde-thiamine pyrophosphate anion to isochorismate to yield 2-succinyl-5-enolpyruvyl-6-hydroxy-3-cyclohexene-1-carboxylate (SEPHCHC). The polypeptide is 2-succinyl-5-enolpyruvyl-6-hydroxy-3-cyclohexene-1-carboxylate synthase (Corynebacterium diphtheriae (strain ATCC 700971 / NCTC 13129 / Biotype gravis)).